A 311-amino-acid polypeptide reads, in one-letter code: 3'(2'),5'-bisphosphate nucleotidase 1 (311 aa).

D49 acts as the Proton acceptor in catalysis. 4 residues coordinate Mg(2+): E72, D116, L118, and D119. The Proton acceptor role is filled by T121. AMP-binding residues include T202, H205, G227, and K231. Residue D254 participates in Mg(2+) binding.

Belongs to the inositol monophosphatase superfamily. Mg(2+) is required as a cofactor.

The catalysed reaction is adenosine 3',5'-bisphosphate + H2O = AMP + phosphate. It carries out the reaction adenosine 2',5'-bisphosphate + H2O = AMP + phosphate. It catalyses the reaction 3'-phosphoadenylyl sulfate + H2O = adenosine 5'-phosphosulfate + phosphate. The enzyme catalyses 1D-myo-inositol 1,4-bisphosphate + H2O = 1D-myo-inositol 4-phosphate + phosphate. The catalysed reaction is 1D-myo-inositol 1,3,4-trisphosphate + H2O = 1D-myo-inositol 3,4-bisphosphate + phosphate. Its activity is regulated as follows. Inhibited by Li(+) and Ca(2+), but not by Na(+). In terms of biological role, phosphatase that converts 3'(2')-phosphoadenosine 5'-phosphate (PAP) to AMP and adenosine 3'-phosphate 5'-phosphosulfate (PAPS) to adenosine 5'-phosphosulfate (APS). Is also able to hydrolyze inositol 1,4-bisphosphate (Ins(1,4)P2) and inositol 1,3,4-trisphosphate (Ins(1,3,4)P3), but is not active on AMP, 3'-AMP, fructose-1,6-bisphosphate, Ins(1)P, Ins(2)P and Ins(1,4,5)P3. Probably prevents the toxic accumulation of PAP, a compound which inhibits a variety of proteins, including PAPS-utilizing enzymes such as sulfotransferases, and RNA processing enzymes. Could also play a role in inositol recycling and phosphoinositide metabolism. In Dictyostelium discoideum (Social amoeba), this protein is 3'(2'),5'-bisphosphate nucleotidase 1 (bpnt1).